Consider the following 89-residue polypeptide: Cell division topological specificity factor (89 aa).

This sequence belongs to the MinE family.

In terms of biological role, prevents the cell division inhibition by proteins MinC and MinD at internal division sites while permitting inhibition at polar sites. This ensures cell division at the proper site by restricting the formation of a division septum at the midpoint of the long axis of the cell. The sequence is that of Cell division topological specificity factor from Laribacter hongkongensis (strain HLHK9).